Here is a 100-residue protein sequence, read N- to C-terminus: MIPLQHGLILAAILFVLGLTGLLIRRNLLFMLISLEVMINAAALAFVVAGSYWGQADGQVMYILAITLAAAEASIGLALLLQLYRRRHTLDIDTVSEMRG.

The next 3 membrane-spanning stretches (helical) occupy residues 4 to 24 (LQHGLILAAILFVLGLTGLLI), 28 to 48 (LLFMLISLEVMINAAALAFVV), and 60 to 80 (VMYILAITLAAAEASIGLALL).

Belongs to the complex I subunit 4L family. As to quaternary structure, NDH-1 is composed of 13 different subunits. Subunits NuoA, H, J, K, L, M, N constitute the membrane sector of the complex.

It is found in the cell inner membrane. It carries out the reaction a quinone + NADH + 5 H(+)(in) = a quinol + NAD(+) + 4 H(+)(out). Functionally, NDH-1 shuttles electrons from NADH, via FMN and iron-sulfur (Fe-S) centers, to quinones in the respiratory chain. The immediate electron acceptor for the enzyme in this species is believed to be ubiquinone. Couples the redox reaction to proton translocation (for every two electrons transferred, four hydrogen ions are translocated across the cytoplasmic membrane), and thus conserves the redox energy in a proton gradient. This Yersinia pseudotuberculosis serotype O:1b (strain IP 31758) protein is NADH-quinone oxidoreductase subunit K.